The sequence spans 502 residues: 1-aminocyclopropane-1-carboxylate synthase-like protein 1 (502 aa).

A disordered region spans residues methionine 1–methionine 24. A substrate-binding site is contributed by glutamate 106. Lysine 324 is subject to N6-(pyridoxal phosphate)lysine.

Belongs to the class-I pyridoxal-phosphate-dependent aminotransferase family.

Does not catalyze the synthesis of 1-aminocyclopropane-1-carboxylate but is capable of catalyzing the deamination of L-vinylglycine. The sequence is that of 1-aminocyclopropane-1-carboxylate synthase-like protein 1 (Accs) from Mus musculus (Mouse).